The sequence spans 160 residues: MIKNRKKKSYTSVYALGQYISMSAHKARRVIDQIRGRSYEEALMILELMPYRGCYPIFKLVYSAAANASHNKGFKETNLVISKAEVNQGNTVKKLKPRARGRSYPIKRSTCHITIVLEDISFYQQYEEYLMYLKKPGCSNENRNLTCHDTYSSGGLWDKK.

The protein belongs to the universal ribosomal protein uL22 family. Part of the 50S ribosomal subunit.

Its subcellular location is the plastid. It is found in the chloroplast. Functionally, this protein binds specifically to 23S rRNA. Its function is as follows. The globular domain of the protein is located near the polypeptide exit tunnel on the outside of the subunit, while an extended beta-hairpin is found that lines the wall of the exit tunnel in the center of the 70S ribosome. The polypeptide is Large ribosomal subunit protein uL22c (rpl22) (Nasturtium officinale (Watercress)).